Here is a 556-residue protein sequence, read N- to C-terminus: Urocanate hydratase (556 aa).

NAD(+) is bound by residues 52 to 53 (GG), Gln-130, 176 to 178 (GMG), Glu-196, Arg-201, 242 to 243 (NA), 263 to 267 (QTSAH), 273 to 274 (YL), and Tyr-322. Residue Cys-410 is part of the active site. Gly-492 provides a ligand contact to NAD(+).

This sequence belongs to the urocanase family. NAD(+) is required as a cofactor.

The protein localises to the cytoplasm. It catalyses the reaction 4-imidazolone-5-propanoate = trans-urocanate + H2O. Its pathway is amino-acid degradation; L-histidine degradation into L-glutamate; N-formimidoyl-L-glutamate from L-histidine: step 2/3. Functionally, catalyzes the conversion of urocanate to 4-imidazolone-5-propionate. The chain is Urocanate hydratase from Bradyrhizobium sp. (strain BTAi1 / ATCC BAA-1182).